A 450-amino-acid chain; its full sequence is Grayanic acid biosynthesis cluster O-methyltransferase (450 aa).

Residue Asp254 coordinates S-adenosyl-L-methionine. The Proton acceptor role is filled by His301.

The protein belongs to the class I-like SAM-binding methyltransferase superfamily. Cation-independent O-methyltransferase family. COMT subfamily.

The protein operates within secondary metabolite biosynthesis. Its function is as follows. Non-reducing polyketide synthase; part of the gene cluster that mediates the biosynthesis of orcinol depsidone grayanic acid (GRA), the only major secondary metabolite known in C.grayi. The first step consists in the ring and depside synthesis by PKS16 leading to 4-O-demethylsphaerophorin, involving different orcinol-like rings, one with acetyl CoA and the other with octanoyl CoA as the starter. Further depsidone formation by the GRA cluster-specific cytochrome P450 leads to 4-O-demethylgrayanic acid. Finally, the cluster specific O-methyltransferase probably converts the 4-O-demethylgrayanic acid into grayanic acid. This chain is Grayanic acid biosynthesis cluster O-methyltransferase, found in Cladonia grayi (Gray's cup lichen).